Here is an 87-residue protein sequence, read N- to C-terminus: Bradykinin-potentiating peptide NDBP12 (87 aa).

The N-terminal stretch at 1 to 22 is a signal peptide; the sequence is MNKRVLLVIFFVTLLVADEVNS. Over residues 64–75 the composition is skewed to low complexity; it reads PAEAPAPAAAAP. Residues 64–87 are disordered; that stretch reads PAEAPAPAAAAPEEPPVEQRRRRR.

The protein belongs to the non-disulfide-bridged peptide (NDBP) superfamily. Long chain multifunctional peptide (group 2) family. As to expression, expressed by the venom gland.

The protein localises to the secreted. Its function is as follows. Inhibits angiotensin-converting enzyme (ACE), but does not serve as substrate for the enzyme. Potentiates bradykinin (BK) on the isolated guinea pig ileum as well as the isolated rat uterus for contraction. Also potentiates in vivo the depressor effect of BK on arterial blood pressure in the normotensive anesthetized rat. This is Bradykinin-potentiating peptide NDBP12 from Lychas mucronatus (Chinese swimming scorpion).